Reading from the N-terminus, the 424-residue chain is Tol-Pal system protein TolB (424 aa).

The N-terminal stretch at 1-16 (MKQLLVLILSLYTTLA) is a signal peptide.

It belongs to the TolB family. In terms of assembly, the Tol-Pal system is composed of five core proteins: the inner membrane proteins TolA, TolQ and TolR, the periplasmic protein TolB and the outer membrane protein Pal. They form a network linking the inner and outer membranes and the peptidoglycan layer.

It is found in the periplasm. Part of the Tol-Pal system, which plays a role in outer membrane invagination during cell division and is important for maintaining outer membrane integrity. The protein is Tol-Pal system protein TolB of Ruthia magnifica subsp. Calyptogena magnifica.